Here is a 398-residue protein sequence, read N- to C-terminus: Succinate--CoA ligase [ADP-forming] subunit beta (398 aa).

Residues 9-253 (KELLKSYGVA…EAEEDPKELE (245 aa)) form the ATP-grasp domain. ATP-binding positions include lysine 46, 53–55 (GRG), glutamate 108, cysteine 111, and glutamate 116. Residues asparagine 208 and aspartate 222 each contribute to the Mg(2+) site. Substrate contacts are provided by residues asparagine 273 and 330–332 (GIM).

The protein belongs to the succinate/malate CoA ligase beta subunit family. As to quaternary structure, heterotetramer of two alpha and two beta subunits. It depends on Mg(2+) as a cofactor.

The catalysed reaction is succinate + ATP + CoA = succinyl-CoA + ADP + phosphate. The enzyme catalyses GTP + succinate + CoA = succinyl-CoA + GDP + phosphate. Its pathway is carbohydrate metabolism; tricarboxylic acid cycle; succinate from succinyl-CoA (ligase route): step 1/1. Functionally, succinyl-CoA synthetase functions in the citric acid cycle (TCA), coupling the hydrolysis of succinyl-CoA to the synthesis of either ATP or GTP and thus represents the only step of substrate-level phosphorylation in the TCA. The beta subunit provides nucleotide specificity of the enzyme and binds the substrate succinate, while the binding sites for coenzyme A and phosphate are found in the alpha subunit. This Acidiphilium cryptum (strain JF-5) protein is Succinate--CoA ligase [ADP-forming] subunit beta.